The following is a 555-amino-acid chain: Urocanate hydratase (555 aa).

NAD(+) is bound by residues 52 to 53 (GG), Gln-130, 176 to 178 (GMG), Glu-196, Arg-201, 242 to 243 (NA), 263 to 267 (QTSAH), 273 to 274 (YL), and Tyr-322. Cys-410 is an active-site residue. Gly-492 contributes to the NAD(+) binding site.

This sequence belongs to the urocanase family. It depends on NAD(+) as a cofactor.

It localises to the cytoplasm. The enzyme catalyses 4-imidazolone-5-propanoate = trans-urocanate + H2O. It functions in the pathway amino-acid degradation; L-histidine degradation into L-glutamate; N-formimidoyl-L-glutamate from L-histidine: step 2/3. Catalyzes the conversion of urocanate to 4-imidazolone-5-propionate. This is Urocanate hydratase from Shewanella putrefaciens (strain CN-32 / ATCC BAA-453).